The chain runs to 445 residues: Sensor protein kinase CarS (445 aa).

An N-terminal signal peptide occupies residues 1-24; it reads MRSIQRRLSVGLFAVLLVVGLVLA. Residues 150–170 traverse the membrane as a helical segment; that stretch reads FARVQWMGLGAGALALLLVLL. The 52-residue stretch at 177-228 folds into the HAMP domain; it reads RRSLRPLEEVRLQIAQLQQGQRSQLDNQAPEELEPLVEQINHLLAHTEETLK. The Histidine kinase domain occupies 236 to 438; sequence NLGHALKTPL…RVSVELPLQK (203 aa). The residue at position 239 (His-239) is a Phosphohistidine; by autocatalysis.

The protein localises to the membrane. It catalyses the reaction ATP + protein L-histidine = ADP + protein N-phospho-L-histidine.. Functionally, member of the two-component regulatory system CarS/CarR that regulates the expression of multiple genes involved in calcium signaling and homeostasis including CarO and CarP. May function as a membrane-associated protein kinase that phosphorylates CarR in response to environmental signals leading to activation of specific gene promoters. The sequence is that of Sensor protein kinase CarS (carS) from Pseudomonas aeruginosa (strain ATCC 15692 / DSM 22644 / CIP 104116 / JCM 14847 / LMG 12228 / 1C / PRS 101 / PAO1).